We begin with the raw amino-acid sequence, 284 residues long: Tryptophan synthase alpha chain (284 aa).

Active-site proton acceptor residues include E55 and D66.

It belongs to the TrpA family. Tetramer of two alpha and two beta chains.

It carries out the reaction (1S,2R)-1-C-(indol-3-yl)glycerol 3-phosphate + L-serine = D-glyceraldehyde 3-phosphate + L-tryptophan + H2O. It participates in amino-acid biosynthesis; L-tryptophan biosynthesis; L-tryptophan from chorismate: step 5/5. Functionally, the alpha subunit is responsible for the aldol cleavage of indoleglycerol phosphate to indole and glyceraldehyde 3-phosphate. This is Tryptophan synthase alpha chain from Methanococcus voltae.